The chain runs to 243 residues: Trypsin (243 aa).

A signal peptide spans 1–15 (MKFLLLCVLLGAAAA). Positions 16–20 (FDDDK) are cleaved as a propeptide — activation peptide. The Peptidase S1 domain maps to 21-241 (IIGGATCAKS…YNAWIQNTIA (221 aa)). Intrachain disulfides connect Cys-27/Cys-157, Cys-45/Cys-61, Cys-129/Cys-230, Cys-136/Cys-203, Cys-168/Cys-182, and Cys-193/Cys-217. Residue His-60 is the Charge relay system of the active site. The Ca(2+) site is built by Glu-72, Asn-74, and Glu-82. Asp-104 acts as the Charge relay system in catalysis. Ser-197 (charge relay system) is an active-site residue.

It belongs to the peptidase S1 family. Ca(2+) serves as cofactor.

The protein localises to the secreted. The protein resides in the extracellular space. The catalysed reaction is Preferential cleavage: Arg-|-Xaa, Lys-|-Xaa.. This is Trypsin from Xenopus laevis (African clawed frog).